Here is a 945-residue protein sequence, read N- to C-terminus: Endo-1,4-beta-xylanase 1 (945 aa).

Positions 16 to 41 (NGDRNPDKKSRESMEVSRKDNEEPEK) are enriched in basic and acidic residues. Positions 16–50 (NGDRNPDKKSRESMEVSRKDNEEPEKQNNNNVASI) are disordered. CBM-cenC domains are found at residues 57-197 (NVIV…EGPS), 227-362 (IVVN…IEGP), and 397-541 (NILT…GPSS). N86, N239, N305, N349, N417, N453, and N687 each carry an N-linked (GlcNAc...) asparagine glycan. The region spanning 589–884 (SGASVRVRQI…NEAGKRFLAV (296 aa)) is the GH10 domain. The active-site Proton donor is the E718. The active-site Nucleophile is the E819.

The protein belongs to the glycosyl hydrolase 10 (cellulase F) family. Predominantly expressed in vascular bundles, but not in vessel cells. Mostly expressed in stems, at lower levels in roots, and weakly in inflorescences and seedlings.

It is found in the secreted. The protein resides in the cell wall. The catalysed reaction is Endohydrolysis of (1-&gt;4)-beta-D-xylosidic linkages in xylans.. Its pathway is glycan degradation; xylan degradation. Binds to and hydrolyzes insoluble and soluble xylan substrates. Exhibits xylanase activity. This Arabidopsis thaliana (Mouse-ear cress) protein is Endo-1,4-beta-xylanase 1.